We begin with the raw amino-acid sequence, 305 residues long: Olfactory receptor 9G19 (305 aa).

At 1-24 (MDQNNNTVSEFIMLGFTTDPVIQK) the chain is on the extracellular side. Residues 25–45 (VLFAVFLVVYTLTLMGNSSLI) form a helical membrane-spanning segment. Residues 46 to 55 (MLICNDSRLH) are Cytoplasmic-facing. Residues 56-76 (TPMYFFIGNLSFLDLGLSSVY) form a helical membrane-spanning segment. Over 77–96 (TPKILETCISEDKSISFAGC) the chain is Extracellular. The cysteines at positions 96 and 178 are disulfide-linked. A helical membrane pass occupies residues 97–117 (VAQFFFSAALDYTECYLLAAM). The Cytoplasmic portion of the chain corresponds to 118-138 (AYDRYVAISKPLLYSQAMSLK). Residues 139-159 (LCVCFVVASYVGGFINSVIIT) traverse the membrane as a helical segment. At 160–204 (KDTFALTFCNDNVIDDFFCDIPPLVKLACGKKKSFQSVLFFLLTS) the chain is on the extracellular side. Residues 205–225 (NVIIPIVFILATYLFIIATIL) traverse the membrane as a helical segment. Topologically, residues 226 to 236 (RIRSTQGRLKA) are cytoplasmic. The helical transmembrane segment at 237 to 257 (FSTCSSHLISVTLYYGSILYI) threads the bilayer. The Extracellular segment spans residues 258–270 (YARPRSSYSLDRD). Residues 271–291 (KIVSTFYTVVFPMLNPLIYSL) form a helical membrane-spanning segment. Over 292 to 305 (RNKDVKEALNKLLK) the chain is Cytoplasmic.

It belongs to the G-protein coupled receptor 1 family.

It is found in the cell membrane. Functionally, odorant receptor. In Mus musculus (Mouse), this protein is Olfactory receptor 9G19.